The primary structure comprises 116 residues: Alpha-amylase inhibitor 5 (116 aa).

5 disulfide bridges follow: cysteine 4/cysteine 55, cysteine 18/cysteine 44, cysteine 27/cysteine 77, cysteine 45/cysteine 95, and cysteine 57/cysteine 106.

This sequence belongs to the protease inhibitor I6 (cereal trypsin/alpha-amylase inhibitor) family.

It localises to the secreted. In terms of biological role, alpha-amylase inhibitor. The sequence is that of Alpha-amylase inhibitor 5 from Sorghum bicolor (Sorghum).